Reading from the N-terminus, the 347-residue chain is Mediator of RNA polymerase II transcription subunit 7 (347 aa).

2 disordered regions span residues 97 to 172 and 302 to 326; these read GIER…TQTH and VPVGARTGTTVGDRRVGVDGEGAEE. Composition is skewed to low complexity over residues 108–171 and 302–312; these read STTT…STQT and VPVGARTGTTV.

Belongs to the Mediator complex subunit 7 family. As to quaternary structure, component of the Mediator complex.

The protein resides in the nucleus. Component of the Mediator complex, a coactivator involved in the regulated transcription of nearly all RNA polymerase II-dependent genes. Mediator functions as a bridge to convey information from gene-specific regulatory proteins to the basal RNA polymerase II transcription machinery. Mediator is recruited to promoters by direct interactions with regulatory proteins and serves as a scaffold for the assembly of a functional preinitiation complex with RNA polymerase II and the general transcription factors. The polypeptide is Mediator of RNA polymerase II transcription subunit 7 (med-7) (Neurospora crassa (strain ATCC 24698 / 74-OR23-1A / CBS 708.71 / DSM 1257 / FGSC 987)).